We begin with the raw amino-acid sequence, 240 residues long: Uridylate kinase (240 aa).

An ATP-binding site is contributed by K12–G15. Residues G20–G25 are involved in allosteric activation by GTP. A UMP-binding site is contributed by G54. 2 residues coordinate ATP: G55 and R59. UMP-binding positions include D74 and T135–T142. ATP is bound by residues N163, Y169, and D172.

Belongs to the UMP kinase family. Homohexamer.

It localises to the cytoplasm. It catalyses the reaction UMP + ATP = UDP + ADP. The protein operates within pyrimidine metabolism; CTP biosynthesis via de novo pathway; UDP from UMP (UMPK route): step 1/1. Allosterically activated by GTP. Inhibited by UTP. Its function is as follows. Catalyzes the reversible phosphorylation of UMP to UDP. The chain is Uridylate kinase from Geobacillus thermodenitrificans (strain NG80-2).